The primary structure comprises 235 residues: Probable GTP-binding protein EngB (235 aa).

An EngB-type G domain is found at 23–219 (QVPEIAFAGR…NDKIIELLGL (197 aa)). Residues 31-38 (GRSNAGKS), 58-62 (GRTQH), 92-95 (DLPG), 159-162 (TKSD), and 193-200 (FTAQMFSA) contribute to the GTP site. Residues Ser38 and Thr60 each contribute to the Mg(2+) site.

The protein belongs to the TRAFAC class TrmE-Era-EngA-EngB-Septin-like GTPase superfamily. EngB GTPase family. Mg(2+) serves as cofactor.

In terms of biological role, necessary for normal cell division and for the maintenance of normal septation. The polypeptide is Probable GTP-binding protein EngB (Janthinobacterium sp. (strain Marseille) (Minibacterium massiliensis)).